The following is a 507-amino-acid chain: Tryptophan aminotransferase-related protein 2 (507 aa).

The segment at 91–135 is disordered; that stretch reads PPPHHHHHDAGLATRSSDAAVHRRARTASSMAPSTGKPAVTTDSV. Pyridoxal 5'-phosphate is bound by residues Y169, 211–212, N282, 304–307, 327–330, and R338; these read ST, DLAY, and TVSK. K330 bears the N6-(pyridoxal phosphate)lysine mark.

Belongs to the alliinase family. Pyridoxal 5'-phosphate serves as cofactor. Widely expressed.

The catalysed reaction is L-tryptophan + 2-oxoglutarate = indole-3-pyruvate + L-glutamate. Its pathway is plant hormone metabolism; auxin biosynthesis. Probable tryptophan aminotransferase involved in auxin (IAA) biosynthesis. Required for auxin production to initiate multiple change in growth in response to environmental and developmental cues. Functions upstream of YUCCA1 in auxin biosynthesis. Required for polar auxin transport. This Oryza sativa subsp. japonica (Rice) protein is Tryptophan aminotransferase-related protein 2.